A 213-amino-acid polypeptide reads, in one-letter code: Glycerol-3-phosphate acyltransferase (213 aa).

6 helical membrane passes run 3 to 23 (ILLL…LWIG), 54 to 76 (TITF…WLGI), 83 to 100 (IIGF…FTGF), 110 to 130 (AGVL…VFAL), 142 to 162 (SITA…IHFL), and 163 to 183 (LDGY…VIIF).

The protein belongs to the PlsY family. Probably interacts with PlsX.

It is found in the cell membrane. It catalyses the reaction an acyl phosphate + sn-glycerol 3-phosphate = a 1-acyl-sn-glycero-3-phosphate + phosphate. The protein operates within lipid metabolism; phospholipid metabolism. Functionally, catalyzes the transfer of an acyl group from acyl-phosphate (acyl-PO(4)) to glycerol-3-phosphate (G3P) to form lysophosphatidic acid (LPA). This enzyme utilizes acyl-phosphate as fatty acyl donor, but not acyl-CoA or acyl-ACP. The chain is Glycerol-3-phosphate acyltransferase from Streptococcus thermophilus (strain ATCC BAA-491 / LMD-9).